A 569-amino-acid chain; its full sequence is Santalene synthase (569 aa).

Residues Arg284, Asp321, Asp325, and Arg460 each coordinate (2E)-geranyl diphosphate. Mg(2+) contacts are provided by Asp321 and Asp325. Positions 321 to 325 match the DDXXD motif motif; that stretch reads DDGYD. Residues Asn463, Thr467, and Glu471 each contribute to the Mg(2+) site.

The protein belongs to the terpene synthase family. Tpsb subfamily. Mg(2+) is required as a cofactor. It depends on Mn(2+) as a cofactor.

It catalyses the reaction (2E,6E)-farnesyl diphosphate = (1S,5S,6R)-alpha-bergamotene + diphosphate. The catalysed reaction is (2E,6E)-farnesyl diphosphate = (+)-alpha-santalene + diphosphate. The enzyme catalyses (2E,6E)-farnesyl diphosphate = (-)-beta-santalene + diphosphate. Functionally, catalyzes a mixture of sesquiterpenoids from (2E,6E)-farnesyl diphosphate in fragrance biosynthesis. Catalyzes the formation of alpha-santalene, beta-santalene, epi-beta-santalene and exo-alpha-bergamotene, as well as traces of alpha-farnesene and beta-farnesene. Also acts with (Z,Z)-farnesyl diphosphate isomer, producing alpha-endo-bergamotene, alpha-santalene, (Z)-beta-farnesene, epi-beta-santalene, and beta-santalene. The protein is Santalene synthase of Santalum album (White sandalwood).